Consider the following 86-residue polypeptide: Small ribosomal subunit protein bS16c (86 aa).

Belongs to the bacterial ribosomal protein bS16 family.

The protein resides in the plastid. It is found in the chloroplast. The polypeptide is Small ribosomal subunit protein bS16c (Liriodendron tulipifera (Tuliptree)).